A 180-amino-acid polypeptide reads, in one-letter code: MKCLLLALGLALACGVQAIIVTQTMKGLDIQKVAGTWHSLAMAASDISLLDAQSAPLRVYVEELKPTPEGNLEILLQKWENGECAQKKIIAEKTKIPAVFKIDALNENKVLVLDTDYKKYLLFCMENSAEPEQSLACQCLVRTPEVDNEALEKFDKALKALPMHIRLAFNPTQLEGQCHV.

The signal sequence occupies residues 1 to 18; that stretch reads MKCLLLALGLALACGVQA. 3 disulfides stabilise this stretch: Cys84-Cys178, Cys124-Cys137, and Cys124-Cys139.

This sequence belongs to the calycin superfamily. Lipocalin family. In terms of assembly, under physiological conditions beta-lactoglobulin exists as an equilibrium mixture of monomeric and dimeric forms. In terms of processing, alternate disulfide bonds occur in equal amounts.

Its subcellular location is the secreted. Its function is as follows. Lactoglobulin is the primary component of whey, it binds retinol and is probably involved in the transport of that molecule. The chain is Beta-lactoglobulin-1/B from Ovis aries (Sheep).